The sequence spans 125 residues: Holo-[acyl-carrier-protein] synthase (125 aa).

The Mg(2+) site is built by Asp8 and Glu57.

Belongs to the P-Pant transferase superfamily. AcpS family. Mg(2+) serves as cofactor.

The protein localises to the cytoplasm. It carries out the reaction apo-[ACP] + CoA = holo-[ACP] + adenosine 3',5'-bisphosphate + H(+). In terms of biological role, transfers the 4'-phosphopantetheine moiety from coenzyme A to a Ser of acyl-carrier-protein. This Neisseria meningitidis serogroup C (strain 053442) protein is Holo-[acyl-carrier-protein] synthase.